The following is a 238-amino-acid chain: uncharacterized protein (238 aa).

Positions 3–116 (RVIIVDDEQP…RLAKTLTRLS (114 aa)) constitute a Response regulatory domain. Residue D54 is modified to 4-aspartylphosphate. The region spanning 136–237 (IPCSGHNRIF…LKSLKEKLGI (102 aa)) is the HTH LytTR-type domain.

This is an uncharacterized protein from Yersinia pestis.